Reading from the N-terminus, the 265-residue chain is Undecaprenyl-diphosphatase (265 aa).

Transmembrane regions (helical) follow at residues 19-39, 42-62, 80-100, 108-128, 143-163, 181-201, 220-240, and 243-263; these read FLPV…GFTG, ADSF…CLYW, IRGL…GLVA, LFNP…IFLV, MTPG…WPGF, SLAA…ATLY, IGFV…IVLV, and ITLR…FFFW.

The protein belongs to the UppP family.

It localises to the cell inner membrane. It catalyses the reaction di-trans,octa-cis-undecaprenyl diphosphate + H2O = di-trans,octa-cis-undecaprenyl phosphate + phosphate + H(+). In terms of biological role, catalyzes the dephosphorylation of undecaprenyl diphosphate (UPP). Confers resistance to bacitracin. The chain is Undecaprenyl-diphosphatase from Solidesulfovibrio magneticus (strain ATCC 700980 / DSM 13731 / RS-1) (Desulfovibrio magneticus).